The following is a 402-amino-acid chain: Olfactomedin-like protein 1 (402 aa).

Positions 1–28 are cleaved as a signal peptide; that stretch reads MMVALRGASALLVLFLAAFLPPPQCTQD. The N-linked (GlcNAc...) asparagine glycan is linked to N66. Residues 79-133 adopt a coiled-coil conformation; sequence SEYKSAVGNLALRVERAQREIDYIQYLREADECIESEDKTLAEMLLQEAEEEKKI. Residues N138 and N183 are each glycosylated (N-linked (GlcNAc...) asparagine). The region spanning 140–397 is the Olfactomedin-like domain; it reads SCDNMLMGIK…QIIYKLQTKR (258 aa). Cysteines 141 and 324 form a disulfide.

In terms of processing, highly N-glycosylated. In terms of tissue distribution, mainly expressed in the small intestine, liver, lung and heart.

Its subcellular location is the secreted. The protein is Olfactomedin-like protein 1 (OLFML1) of Homo sapiens (Human).